Reading from the N-terminus, the 530-residue chain is MVSQAKQPSNATFKNREKPQEVRKANIIAARAVADAIRTSLGPKGMDKMIKTSRGDIIISNDGHTILKQMAILHPVAKMLVEVSGAQDVEAGDGTTSVVIMTGALLGAAEKLLNKGIHPTIIAESFQRAAERSVEILLNMSTKISLDDKEALVRAASTSLSSKIVSQHSSFLAPLAVDCVLSIASHDSTNVDLNDIRLIKKVGGTIDDTEMVNGVVLTQNAVKTAGGPTRIEKARIGLIQFQISPPKPDTENNIVVNDYRQMDKILKEERAYLLNICKKIKKAKCNVLLIQKSILRDAVNDLALHFLSKLGIMVVRDIERDEVEFLSKSLGCKPISDVELFTEDRLGSADVVEEVESDGSNIVTITGVKTTNKNPTVSVVIRGANNMVLDETERSLHDALCVIRCLVKERALIAGGGAPEIEVSYRLMKEARTMEGVEAFVWQEYAEALEVIPTTLAENAGLNSLNVVTELRLRHENGESNSGISVRRSGTSNTYEDHILQPVLVSTSAIRLASECVKSILRIDDITFSR.

The segment covering 1-13 (MVSQAKQPSNATF) has biased composition (polar residues). The segment at 1–20 (MVSQAKQPSNATFKNREKPQ) is disordered.

This sequence belongs to the TCP-1 chaperonin family. As to quaternary structure, heterooligomeric complex of about 850 to 900 kDa that forms two stacked rings, 12 to 16 nm in diameter.

The protein localises to the cytoplasm. Molecular chaperone; assists the folding of proteins upon ATP hydrolysis. Known to play a role, in vitro, in the folding of actin and tubulin. This is T-complex protein 1 subunit delta (CCT4) from Kluyveromyces lactis (strain ATCC 8585 / CBS 2359 / DSM 70799 / NBRC 1267 / NRRL Y-1140 / WM37) (Yeast).